The following is a 262-amino-acid chain: Tryptophan synthase alpha chain (262 aa).

Residues E49 and D60 each act as proton acceptor in the active site.

It belongs to the TrpA family. In terms of assembly, tetramer of two alpha and two beta chains.

The enzyme catalyses (1S,2R)-1-C-(indol-3-yl)glycerol 3-phosphate + L-serine = D-glyceraldehyde 3-phosphate + L-tryptophan + H2O. Its pathway is amino-acid biosynthesis; L-tryptophan biosynthesis; L-tryptophan from chorismate: step 5/5. Functionally, the alpha subunit is responsible for the aldol cleavage of indoleglycerol phosphate to indole and glyceraldehyde 3-phosphate. The chain is Tryptophan synthase alpha chain from Thermoanaerobacter pseudethanolicus (strain ATCC 33223 / 39E) (Clostridium thermohydrosulfuricum).